Here is a 166-residue protein sequence, read N- to C-terminus: Peptidyl-prolyl cis-trans isomerase-like 1 (166 aa).

The region spanning 10 to 164 (QPPNVYLETS…DDVKILKAYP (155 aa)) is the PPIase cyclophilin-type domain. Cyclosporin A-binding positions include 54 to 65 (HRIIKDFMIQGG), 70 to 71 (TG), 99 to 104 (AMANAG), 109 to 113 (GSQFF), Thr119, and Lys125. Residue Ser149 is modified to Phosphoserine.

The protein belongs to the cyclophilin-type PPIase family. PPIL1 subfamily. As to quaternary structure, identified in the spliceosome C complex. Interacts with SNW1/SKIP. Interacts with CDC40/PRP17; this interaction leads to CDC40 isomerization. Interacts with RBM22.

The protein localises to the nucleus. The catalysed reaction is [protein]-peptidylproline (omega=180) = [protein]-peptidylproline (omega=0). Inhibited by Cyclosporin A. Its function is as follows. Involved in pre-mRNA splicing as component of the spliceosome. PPIases accelerate the folding of proteins. It catalyzes the cis-trans isomerization of proline imidic peptide bonds in oligopeptides. Catalyzes prolyl peptide bond isomerization in CDC40/PRP17. Plays an important role in embryonic brain development; this function is independent of its isomerase activity. The chain is Peptidyl-prolyl cis-trans isomerase-like 1 (Ppil1) from Mus musculus (Mouse).